A 61-amino-acid polypeptide reads, in one-letter code: Bowman-Birk type proteinase inhibitor (61 aa).

Intrachain disulfides connect cysteine 4-cysteine 57, cysteine 5-cysteine 20, cysteine 8-cysteine 53, cysteine 10-cysteine 18, cysteine 27-cysteine 34, cysteine 31-cysteine 46, and cysteine 36-cysteine 44.

This sequence belongs to the Bowman-Birk serine protease inhibitor family.

In terms of biological role, strong inhibitor of trypsin with a 1:1 stoichiometry. Weaker inhibitor of chymotrypsin. The polypeptide is Bowman-Birk type proteinase inhibitor (Erythrina variegata (Indian coral tree)).